Reading from the N-terminus, the 220-residue chain is Ribosomal RNA large subunit methyltransferase E (220 aa).

5 residues coordinate S-adenosyl-L-methionine: G60, W62, D92, D108, and D133. K173 (proton acceptor) is an active-site residue. A disordered region spans residues R197–R220.

It belongs to the class I-like SAM-binding methyltransferase superfamily. RNA methyltransferase RlmE family.

The protein resides in the cytoplasm. It carries out the reaction uridine(2552) in 23S rRNA + S-adenosyl-L-methionine = 2'-O-methyluridine(2552) in 23S rRNA + S-adenosyl-L-homocysteine + H(+). Specifically methylates the uridine in position 2552 of 23S rRNA at the 2'-O position of the ribose in the fully assembled 50S ribosomal subunit. The protein is Ribosomal RNA large subunit methyltransferase E of Burkholderia ambifaria (strain MC40-6).